Reading from the N-terminus, the 336-residue chain is Glyceraldehyde-3-phosphate dehydrogenase, plasmid (336 aa).

NAD(+)-binding positions include 12-13 (RI), D37, R81, and S123. D-glyceraldehyde 3-phosphate contacts are provided by residues 154–156 (SCT) and T185. The active-site Nucleophile is the C155. N186 contributes to the NAD(+) binding site. Residues R200, 213–214 (TG), and R236 each bind D-glyceraldehyde 3-phosphate. N317 provides a ligand contact to NAD(+).

This sequence belongs to the glyceraldehyde-3-phosphate dehydrogenase family. Homotetramer.

The catalysed reaction is D-glyceraldehyde 3-phosphate + phosphate + NAD(+) = (2R)-3-phospho-glyceroyl phosphate + NADH + H(+). Its pathway is carbohydrate biosynthesis; Calvin cycle. Functionally, could be involved in carbon fixation as a component of the Calvin cycle. Catalyzes the oxidative phosphorylation of glyceraldehyde 3-phosphate (G3P) to 1,3-bisphosphoglycerate (BPG) using the cofactor NAD. The first reaction step involves the formation of a hemiacetal intermediate between G3P and a cysteine residue, and this hemiacetal intermediate is then oxidized to a thioester, with concomitant reduction of NAD to NADH. The reduced NADH is then exchanged with the second NAD, and the thioester is attacked by a nucleophilic inorganic phosphate to produce BPG. In Cupriavidus necator (strain ATCC 17699 / DSM 428 / KCTC 22496 / NCIMB 10442 / H16 / Stanier 337) (Ralstonia eutropha), this protein is Glyceraldehyde-3-phosphate dehydrogenase, plasmid (cbbGP).